The chain runs to 1240 residues: RNA-directed RNA polymerase VP2 (1240 aa).

The RdRp catalytic domain occupies 516-764 (LVANYINKHM…KLYALFGARI (249 aa)).

The protein belongs to the reoviridae RNA-directed RNA polymerase family.

Its subcellular location is the virion. The enzyme catalyses RNA(n) + a ribonucleoside 5'-triphosphate = RNA(n+1) + diphosphate. RNA-directed RNA polymerase that is involved in transcription and genome replication. Following infection, it catalyzes the synthesis of fully conservative plus strands. After core assembly, which consists in recruitment of one capped plus-strand for each genomic segments and polymerase complexes, the polymerase switches mode and catalyzes the synthesis of complementary minus-strands. In Oncorhynchus keta (Chum salmon), this protein is RNA-directed RNA polymerase VP2 (S2).